We begin with the raw amino-acid sequence, 278 residues long: MDVRQSIHSAHAKTLDTQGLRNEFLVEKVFVADEYTMVYSHIDRIIVGGIMPVTKTVSVGGEVGKQLGVSYFLERRELGVINIGGAGTITVDGQCYEIGHREALYVGKGAKEVVFASIDTATPAKFYYNCAPAHTTYPTKKVTPDEVSPVTLGDNLTSNRRTINKYFVPDVLETCQLSMGLTELAPGNLWNTMPCHTHERRMEVYFYFNMDDDACVFHMMGQPQETRHIVMHNEQAVISPSWSIHSGVGTKAYTFIWGMVGENQVFDDMDHVAVKDLR.

Residues His196, His198, Glu203, and His245 each coordinate Zn(2+).

It belongs to the KduI family. As to quaternary structure, homohexamer. The cofactor is Zn(2+).

The enzyme catalyses 5-dehydro-4-deoxy-D-glucuronate = 3-deoxy-D-glycero-2,5-hexodiulosonate. It participates in glycan metabolism; pectin degradation; 2-dehydro-3-deoxy-D-gluconate from pectin: step 4/5. Its function is as follows. Catalyzes the isomerization of 5-dehydro-4-deoxy-D-glucuronate to 3-deoxy-D-glycero-2,5-hexodiulosonate. In Escherichia coli (strain SMS-3-5 / SECEC), this protein is 4-deoxy-L-threo-5-hexosulose-uronate ketol-isomerase.